A 496-amino-acid chain; its full sequence is uncharacterized protein (496 aa).

A signal peptide spans 1–19 (MTTGYILIAAILILGGVIA). Residues 45–67 (AVLVTILTGGLVSATTLAILFIA) form a helical membrane-spanning segment. The segment at 113–137 (LETTRTDKKQVETQRDQAKKEKLKA) is disordered.

It localises to the membrane. This is an uncharacterized protein from Nostoc sp. (strain PCC 7120 / SAG 25.82 / UTEX 2576).